Consider the following 267-residue polypeptide: 5'-nucleotidase SurE (267 aa).

A divalent metal cation contacts are provided by Asp-9, Asp-10, Ser-41, and Asn-95.

The protein belongs to the SurE nucleotidase family. The cofactor is a divalent metal cation.

The protein resides in the cytoplasm. The enzyme catalyses a ribonucleoside 5'-phosphate + H2O = a ribonucleoside + phosphate. Functionally, nucleotidase that shows phosphatase activity on nucleoside 5'-monophosphates. The sequence is that of 5'-nucleotidase SurE from Aeropyrum pernix (strain ATCC 700893 / DSM 11879 / JCM 9820 / NBRC 100138 / K1).